We begin with the raw amino-acid sequence, 495 residues long: UDP-N-acetylmuramoyl-L-alanyl-D-glutamate--2,6-diaminopimelate ligase (495 aa).

Residues Leu-27, Ser-29, and 44-46 (HQA) contribute to the UDP-N-acetyl-alpha-D-muramoyl-L-alanyl-D-glutamate site. ATP is bound at residue 116–122 (GTNGKTT). Residues Asn-157, 158-159 (TT), Ser-185, Gln-191, and Arg-193 contribute to the UDP-N-acetyl-alpha-D-muramoyl-L-alanyl-D-glutamate site. Lys-225 is subject to N6-carboxylysine. Residues Arg-390, 414–417 (DNPR), Gly-465, and Glu-469 contribute to the meso-2,6-diaminopimelate site. Positions 414-417 (DNPR) match the Meso-diaminopimelate recognition motif motif.

This sequence belongs to the MurCDEF family. MurE subfamily. Requires Mg(2+) as cofactor. Carboxylation is probably crucial for Mg(2+) binding and, consequently, for the gamma-phosphate positioning of ATP.

Its subcellular location is the cytoplasm. It carries out the reaction UDP-N-acetyl-alpha-D-muramoyl-L-alanyl-D-glutamate + meso-2,6-diaminopimelate + ATP = UDP-N-acetyl-alpha-D-muramoyl-L-alanyl-gamma-D-glutamyl-meso-2,6-diaminopimelate + ADP + phosphate + H(+). The protein operates within cell wall biogenesis; peptidoglycan biosynthesis. Its function is as follows. Catalyzes the addition of meso-diaminopimelic acid to the nucleotide precursor UDP-N-acetylmuramoyl-L-alanyl-D-glutamate (UMAG) in the biosynthesis of bacterial cell-wall peptidoglycan. This is UDP-N-acetylmuramoyl-L-alanyl-D-glutamate--2,6-diaminopimelate ligase from Shigella flexneri.